The following is a 337-amino-acid chain: Heat-inducible transcription repressor HrcA (337 aa).

The protein belongs to the HrcA family.

Its function is as follows. Negative regulator of class I heat shock genes (grpE-dnaK-dnaJ and groELS operons). Prevents heat-shock induction of these operons. The chain is Heat-inducible transcription repressor HrcA from Polaromonas naphthalenivorans (strain CJ2).